Here is a 226-residue protein sequence, read N- to C-terminus: UPF0173 metal-dependent hydrolase TM_1162 (226 aa).

This sequence belongs to the UPF0173 family.

This Thermotoga maritima (strain ATCC 43589 / DSM 3109 / JCM 10099 / NBRC 100826 / MSB8) protein is UPF0173 metal-dependent hydrolase TM_1162.